Reading from the N-terminus, the 306-residue chain is Aspartate carbamoyltransferase catalytic subunit (306 aa).

Carbamoyl phosphate-binding residues include arginine 54 and threonine 55. Position 83 (lysine 83) interacts with L-aspartate. Positions 104, 132, and 135 each coordinate carbamoyl phosphate. Arginine 165 and arginine 227 together coordinate L-aspartate. Residues leucine 266 and proline 267 each contribute to the carbamoyl phosphate site.

The protein belongs to the aspartate/ornithine carbamoyltransferase superfamily. ATCase family. In terms of assembly, heterododecamer (2C3:3R2) of six catalytic PyrB chains organized as two trimers (C3), and six regulatory PyrI chains organized as three dimers (R2).

It catalyses the reaction carbamoyl phosphate + L-aspartate = N-carbamoyl-L-aspartate + phosphate + H(+). The protein operates within pyrimidine metabolism; UMP biosynthesis via de novo pathway; (S)-dihydroorotate from bicarbonate: step 2/3. Its function is as follows. Catalyzes the condensation of carbamoyl phosphate and aspartate to form carbamoyl aspartate and inorganic phosphate, the committed step in the de novo pyrimidine nucleotide biosynthesis pathway. This Clostridium novyi (strain NT) protein is Aspartate carbamoyltransferase catalytic subunit.